The following is a 220-amino-acid chain: Octanoyltransferase (220 aa).

The region spanning E34–N209 is the BPL/LPL catalytic domain. Substrate contacts are provided by residues R73–H80, S140–G142, and G153–A155. The active-site Acyl-thioester intermediate is C171.

Belongs to the LipB family.

It localises to the cytoplasm. The enzyme catalyses octanoyl-[ACP] + L-lysyl-[protein] = N(6)-octanoyl-L-lysyl-[protein] + holo-[ACP] + H(+). Its pathway is protein modification; protein lipoylation via endogenous pathway; protein N(6)-(lipoyl)lysine from octanoyl-[acyl-carrier-protein]: step 1/2. Its function is as follows. Catalyzes the transfer of endogenously produced octanoic acid from octanoyl-acyl-carrier-protein onto the lipoyl domains of lipoate-dependent enzymes. Lipoyl-ACP can also act as a substrate although octanoyl-ACP is likely to be the physiological substrate. In Shewanella piezotolerans (strain WP3 / JCM 13877), this protein is Octanoyltransferase.